The sequence spans 413 residues: Pyruvate dehydrogenase complex subunit homolog DDB_G0271564, mitochondrial (413 aa).

The N-terminal 19 residues, 1–19, are a transit peptide targeting the mitochondrion; that stretch reads MNRILKQVSNTKGKGIRFY. Residues 29-67 enclose the Peripheral subunit-binding (PSBD) domain; it reads YMFPSVRRLLVEYGINSSKEVTATGPQNRLLKGDVLAYI.

The protein belongs to the 2-oxoacid dehydrogenase family.

It is found in the mitochondrion. Functionally, the pyruvate dehydrogenase complex catalyzes the overall conversion of pyruvate to acetyl-CoA and CO(2). It contains multiple copies of three enzymatic components: pyruvate dehydrogenase (E1), dihydrolipoamide acetyltransferase (E2) and lipoamide dehydrogenase (E3). The protein is Pyruvate dehydrogenase complex subunit homolog DDB_G0271564, mitochondrial (pdhX) of Dictyostelium discoideum (Social amoeba).